The following is a 465-amino-acid chain: Sodium-dependent phosphate transport protein 1 (465 aa).

N-linked (GlcNAc...) asparagine glycosylation is found at N47 and N56. The next 10 helical transmembrane spans lie at 79 to 99 (GIIF…VGYI), 109 to 129 (IGFA…AAAV), 171 to 191 (MSLS…GIIC), 198 to 218 (MVFY…FVLY), 255 to 275 (AMIK…YLWT), 304 to 324 (LPYL…DFLM), 337 to 357 (LFTA…LYLS), 363 to 383 (TITF…GALI), 399 to 419 (VTTL…GLFL), and 428 to 448 (FKIF…YLIF).

This sequence belongs to the major facilitator superfamily. Sodium/anion cotransporter family. In terms of assembly, interacts with PDZK1. In terms of tissue distribution, kidney cortex and liver.

The protein resides in the apical cell membrane. The enzyme catalyses 3 Na(+)(out) + phosphate(out) = 3 Na(+)(in) + phosphate(in). It carries out the reaction urate(out) = urate(in). In terms of biological role, important for the resorption of phosphate by the kidney. May be involved in actively transporting phosphate into cells via Na(+) cotransport in the renal brush border membrane. Plays a role in urate transport in the kidney. The chain is Sodium-dependent phosphate transport protein 1 (SLC17A1) from Oryctolagus cuniculus (Rabbit).